A 199-amino-acid polypeptide reads, in one-letter code: 7-methyl-GTP pyrophosphatase (199 aa).

The active-site Proton acceptor is aspartate 76.

The protein belongs to the Maf family. YceF subfamily. A divalent metal cation is required as a cofactor.

The protein localises to the cytoplasm. The catalysed reaction is N(7)-methyl-GTP + H2O = N(7)-methyl-GMP + diphosphate + H(+). Nucleoside triphosphate pyrophosphatase that hydrolyzes 7-methyl-GTP (m(7)GTP). May have a dual role in cell division arrest and in preventing the incorporation of modified nucleotides into cellular nucleic acids. The sequence is that of 7-methyl-GTP pyrophosphatase (maf-2) from Brucella suis biovar 1 (strain 1330).